We begin with the raw amino-acid sequence, 263 residues long: Hydroxyethylthiazole kinase 1 (263 aa).

Position 42 (Met-42) interacts with substrate. ATP contacts are provided by Lys-118 and Thr-164. Gly-191 is a binding site for substrate.

The protein belongs to the Thz kinase family. Mg(2+) serves as cofactor.

The catalysed reaction is 5-(2-hydroxyethyl)-4-methylthiazole + ATP = 4-methyl-5-(2-phosphooxyethyl)-thiazole + ADP + H(+). Its pathway is cofactor biosynthesis; thiamine diphosphate biosynthesis; 4-methyl-5-(2-phosphoethyl)-thiazole from 5-(2-hydroxyethyl)-4-methylthiazole: step 1/1. Catalyzes the phosphorylation of the hydroxyl group of 4-methyl-5-beta-hydroxyethylthiazole (THZ). The chain is Hydroxyethylthiazole kinase 1 from Clostridium botulinum (strain 657 / Type Ba4).